The chain runs to 278 residues: Heat stress transcription factor C-2b (278 aa).

Over residues 105–114 the composition is skewed to gly residues; that stretch reads AAGGGGGGGG. Residues 105–132 form a disordered region; the sequence is AAGGGGGGGGGKRRDASADGGGGGGDED. The tract at residues 143–179 is hydrophobic repeat HR-A/B; the sequence is LKQEQRTIDDRVAAMWRRVQETERRPKQMLAFLLKVV. The Nuclear localization signal motif lies at 219 to 222; it reads KRAR.

It belongs to the HSF family. Class C subfamily. As to quaternary structure, homotrimer. In terms of processing, exhibits temperature-dependent phosphorylation.

Its subcellular location is the nucleus. Functionally, transcriptional regulator that specifically binds DNA of heat shock promoter elements (HSE). The polypeptide is Heat stress transcription factor C-2b (HSFC2B) (Oryza sativa subsp. japonica (Rice)).